The primary structure comprises 489 residues: N-succinylglutamate 5-semialdehyde dehydrogenase (489 aa).

221 to 226 is a binding site for NAD(+); it reads GSSGTG. Residues E244 and C278 contribute to the active site.

The protein belongs to the aldehyde dehydrogenase family. AstD subfamily.

The enzyme catalyses N-succinyl-L-glutamate 5-semialdehyde + NAD(+) + H2O = N-succinyl-L-glutamate + NADH + 2 H(+). The protein operates within amino-acid degradation; L-arginine degradation via AST pathway; L-glutamate and succinate from L-arginine: step 4/5. Catalyzes the NAD-dependent reduction of succinylglutamate semialdehyde into succinylglutamate. This chain is N-succinylglutamate 5-semialdehyde dehydrogenase, found in Sorangium cellulosum (strain So ce56) (Polyangium cellulosum (strain So ce56)).